We begin with the raw amino-acid sequence, 803 residues long: Mastermind-like domain-containing protein 1 (803 aa).

Disordered regions lie at residues 22 to 50 (NRQE…TGMA), 292 to 374 (LAAS…APSS), 420 to 452 (GHLI…QQSF), and 486 to 641 (QQQQ…PDQS). Residues 296–309 (KQGSATKQGSNRNW) show a composition bias toward polar residues. Pro residues predominate over residues 312–340 (LPPPGLSPPYLPVPSPHPPPPQPPPPPFS). Positions 347 to 362 (SCMSSSSLSGSAVQSS) are enriched in low complexity. Composition is skewed to polar residues over residues 363-374 (PNALLSSMAPSS), 441-452 (NLSSPGLPQQSF), 495-526 (HQAN…SSSP), and 547-564 (PSPQ…QSSL). The span at 571 to 588 (ATPAHAPSATASSTATAT) shows a compositional bias: low complexity. Residues 592 to 622 (QHHHQQHHHQQHHHQQQHHQQQHHQQHHHQQ) show a composition bias toward basic residues. Positions 623 to 641 (QQHQQQQHQQQQQQQPDQS) are enriched in low complexity.

Belongs to the mastermind family.

Its subcellular location is the nucleus. Its function is as follows. Transactivates the HES3 promoter independently of NOTCH proteins. HES3 is a non-canonical NOTCH target gene which lacks binding sites for RBPJ. Required for testosterone production. The chain is Mastermind-like domain-containing protein 1 (Mamld1) from Mus musculus (Mouse).